The primary structure comprises 141 residues: ATP synthase epsilon chain (141 aa).

This sequence belongs to the ATPase epsilon chain family. In terms of assembly, F-type ATPases have 2 components, CF(1) - the catalytic core - and CF(0) - the membrane proton channel. CF(1) has five subunits: alpha(3), beta(3), gamma(1), delta(1), epsilon(1). CF(0) has three main subunits: a, b and c.

The protein resides in the cell inner membrane. Produces ATP from ADP in the presence of a proton gradient across the membrane. The chain is ATP synthase epsilon chain (atpC) from Acidithiobacillus ferridurans.